Reading from the N-terminus, the 105-residue chain is Death-associated protein 1 homolog (105 aa).

A disordered region spans residues 75–105 (AAQVAHQKPVPSAQKLPAGQHLNQHIHQPRK). The span at 95–105 (HLNQHIHQPRK) shows a compositional bias: polar residues.

This sequence belongs to the DAP-DAPL1 family. Associates with ribosomes; inhibiting translation. Interacts with eiF5a (eif5a and eif5a2); inhibiting translation.

Its function is as follows. Ribosome-binding protein involved in ribosome hibernation, a process during which ribosomes are stabilized in an inactive state and preserved from proteasomal degradation. Acts via its association with eiF5a (eif5a and eif5a2) at the polypeptide exit tunnel of the ribosome, preventing mRNA translation. Involved in ribosome hibernation in the mature egg by preventing mRNA translation, leading to ribosome inactivation. Ribosomes, which are produced in large quantities during oogenesis, are stored and translationally repressed in the egg and early embryo. Compared to dap1b, binds and inactivates ribosomes less efficiently. The polypeptide is Death-associated protein 1 homolog (Danio rerio (Zebrafish)).